Reading from the N-terminus, the 249-residue chain is Triosephosphate isomerase (249 aa).

Position 9 to 11 (9 to 11 (NWK)) interacts with substrate. The active-site Electrophile is the His95. Glu167 acts as the Proton acceptor in catalysis. Residues Gly173, Ser213, and 234–235 (GG) contribute to the substrate site.

This sequence belongs to the triosephosphate isomerase family. In terms of assembly, homodimer.

It is found in the cytoplasm. It carries out the reaction D-glyceraldehyde 3-phosphate = dihydroxyacetone phosphate. The protein operates within carbohydrate biosynthesis; gluconeogenesis. It participates in carbohydrate degradation; glycolysis; D-glyceraldehyde 3-phosphate from glycerone phosphate: step 1/1. Involved in the gluconeogenesis. Catalyzes stereospecifically the conversion of dihydroxyacetone phosphate (DHAP) to D-glyceraldehyde-3-phosphate (G3P). This chain is Triosephosphate isomerase, found in Dictyoglomus turgidum (strain DSM 6724 / Z-1310).